The primary structure comprises 150 residues: Globin-3 (150 aa).

The Globin domain occupies 11–150; the sequence is PLTAADKTKI…IICILLNSAY (140 aa). Residues H74 and H106 each contribute to the heme b site.

The protein belongs to the globin family. Monomer.

This chain is Globin-3, found in Mordacia mordax (Southern hemisphere lamprey).